Consider the following 142-residue polypeptide: MHPNNKNSFKSKKKFIDRREAKSQDIKRALTHRARLRKNYFKLLEKEGLQEEGKPEDENDIRPTKKKGINFEERAAIVKQRKEEKRKFKLASVQAKLEKIESNSKERALKREQLKKSTTKGQPLMGPRINDLLDKIKKNEMS.

3 disordered regions span residues 1–23 (MHPN…EAKS), 47–67 (EGLQ…TKKK), and 99–142 (KIES…NEMS). A coiled-coil region spans residues 94–116 (QAKLEKIESNSKERALKREQLKK). Basic and acidic residues-rich tracts occupy residues 99–115 (KIES…EQLK) and 131–142 (DLLDKIKKNEMS).

The protein belongs to the FYV7 family.

It is found in the nucleus. The protein localises to the nucleolus. Functionally, involved in the processing of the 20S pre-rRNA. In Candida albicans (strain SC5314 / ATCC MYA-2876) (Yeast), this protein is rRNA-processing protein FYV7 (FYV7).